A 272-amino-acid chain; its full sequence is Hemin import ATP-binding protein HmuV (272 aa).

The ABC transporter domain maps to 2 to 255; sequence LNADHLHVAR…EPIARCYGFR (254 aa). 34-41 is a binding site for ATP; it reads GRNGAGKS.

It belongs to the ABC transporter superfamily. Heme (hemin) importer (TC 3.A.1.14.5) family. As to quaternary structure, the complex is composed of two ATP-binding proteins (HmuV), two transmembrane proteins (HmuU) and a solute-binding protein (HmuT).

It is found in the cell inner membrane. Part of the ABC transporter complex HmuTUV involved in hemin import. Responsible for energy coupling to the transport system. The polypeptide is Hemin import ATP-binding protein HmuV (Burkholderia pseudomallei (strain 1710b)).